The sequence spans 326 residues: tRNA uridine(34) hydroxylase (326 aa).

One can recognise a Rhodanese domain in the interval 123–217 (ADPEVFVVDT…YLEEVPQEES (95 aa)). Cysteine 177 functions as the Cysteine persulfide intermediate in the catalytic mechanism. Basic and acidic residues predominate over residues 278–288 (QVERFREREKQ). The segment at 278 to 326 (QVERFREREKQVSLANQRGEQHVGGESAKQRAQRREAKLAKKAAQRKQA) is disordered. The segment covering 317–326 (AKKAAQRKQA) has biased composition (basic residues).

The protein belongs to the TrhO family.

The catalysed reaction is uridine(34) in tRNA + AH2 + O2 = 5-hydroxyuridine(34) in tRNA + A + H2O. In terms of biological role, catalyzes oxygen-dependent 5-hydroxyuridine (ho5U) modification at position 34 in tRNAs. The protein is tRNA uridine(34) hydroxylase of Vibrio parahaemolyticus serotype O3:K6 (strain RIMD 2210633).